A 70-amino-acid polypeptide reads, in one-letter code: Gas vesicle protein A (70 aa).

It belongs to the gas vesicle GvpA family. The gas vesicle shell is 2 nm thick and consists of a single layer of this protein. It forms helical ribs nearly perpendicular to the long axis of the vesicle.

The protein resides in the gas vesicle shell. Functionally, gas vesicles are hollow, gas filled proteinaceous nanostructures found in some microorganisms. During planktonic growth they allow positioning of the organism at a favorable depth for light or nutrient acquisition. GvpA forms the protein shell. The polypeptide is Gas vesicle protein A (Bradyrhizobium sp. (strain ORS 278)).